The primary structure comprises 262 residues: Acyl-[acyl-carrier-protein]--UDP-N-acetylglucosamine O-acyltransferase (262 aa).

It belongs to the transferase hexapeptide repeat family. LpxA subfamily. In terms of assembly, homotrimer.

The protein resides in the cytoplasm. The enzyme catalyses a (3R)-hydroxyacyl-[ACP] + UDP-N-acetyl-alpha-D-glucosamine = a UDP-3-O-[(3R)-3-hydroxyacyl]-N-acetyl-alpha-D-glucosamine + holo-[ACP]. The protein operates within glycolipid biosynthesis; lipid IV(A) biosynthesis; lipid IV(A) from (3R)-3-hydroxytetradecanoyl-[acyl-carrier-protein] and UDP-N-acetyl-alpha-D-glucosamine: step 1/6. Its function is as follows. Involved in the biosynthesis of lipid A, a phosphorylated glycolipid that anchors the lipopolysaccharide to the outer membrane of the cell. The polypeptide is Acyl-[acyl-carrier-protein]--UDP-N-acetylglucosamine O-acyltransferase (Shigella dysenteriae serotype 1 (strain Sd197)).